Here is a 164-residue protein sequence, read N- to C-terminus: uncharacterized protein (164 aa).

The RDD domain occupies 26–158 (YAGFWVRFWA…DYIADTTVVH (133 aa)). The next 2 helical transmembrane spans lie at 35–55 (AFLL…SPLF) and 66–86 (MFTF…YFAL).

The protein localises to the cell membrane. This is an uncharacterized protein from Bacillus subtilis (strain 168).